A 561-amino-acid chain; its full sequence is Zinc finger protein 37A (561 aa).

Residues 8–79 (VSFRDVTVGF…EEKFPSQSHL (72 aa)) form the KRAB domain. The C2H2-type 1; degenerate zinc finger occupies 146–168 (FEYNECGKAFPENSLFLVHKRGY). The C2H2-type 2; degenerate zinc-finger motif lies at 243–265 (IEYNECGTFFSEKLVLHLQQRTH). C2H2-type zinc fingers lie at residues 271 to 293 (YECHECGKTFTQKSAHTRHQRTH), 299 to 321 (YECHECGKTFYKNSDLIKHQRIH), 327 to 349 (YGCHECGKSFSEKSTLTQHQRTH), 355 to 377 (YECHECGKTFSFKSVLTVHQKTH), 383 to 405 (YECYACGKAFLRKSDLIKHQRIH), 411 to 433 (YECNECGKSFSEKSTLTKHLRTH), 439 to 461 (YECIQCGKFFCYYSGFTEHLRRH), 467 to 489 (FGCNECGKTFRQKSALIVHQRTH), 495 to 517 (YGCNQCGKSFCVKSKLIAHHRTH), and 523 to 545 (YECNVCGKSFYVKSKLTVHQRIH).

The protein belongs to the krueppel C2H2-type zinc-finger protein family.

Its subcellular location is the nucleus. Functionally, may be involved in transcriptional regulation. In Homo sapiens (Human), this protein is Zinc finger protein 37A (ZNF37A).